The primary structure comprises 332 residues: Glycerol-3-phosphate dehydrogenase [NAD(P)+] (332 aa).

W11, R30, and K108 together coordinate NADPH. Sn-glycerol 3-phosphate-binding residues include K108, G137, and S139. A141 lines the NADPH pocket. 5 residues coordinate sn-glycerol 3-phosphate: K192, D245, S255, R256, and N257. K192 (proton acceptor) is an active-site residue. NADPH is bound at residue R256. Residues V280 and E282 each contribute to the NADPH site.

The protein belongs to the NAD-dependent glycerol-3-phosphate dehydrogenase family.

Its subcellular location is the cytoplasm. The catalysed reaction is sn-glycerol 3-phosphate + NAD(+) = dihydroxyacetone phosphate + NADH + H(+). It carries out the reaction sn-glycerol 3-phosphate + NADP(+) = dihydroxyacetone phosphate + NADPH + H(+). Its pathway is membrane lipid metabolism; glycerophospholipid metabolism. Its function is as follows. Catalyzes the reduction of the glycolytic intermediate dihydroxyacetone phosphate (DHAP) to sn-glycerol 3-phosphate (G3P), the key precursor for phospholipid synthesis. This chain is Glycerol-3-phosphate dehydrogenase [NAD(P)+], found in Burkholderia orbicola (strain MC0-3).